Here is a 287-residue protein sequence, read N- to C-terminus: Cell wall-binding protein YocH (287 aa).

A signal peptide spans 1–25 (MKKTIMSFVAVAALSTTAFGAHASA). 2 consecutive LysM domains span residues 26–69 (KEIT…KLTI) and 78–121 (GQYT…TLSV). The segment covering 130–143 (TATENAQTNAPQAA) has biased composition (low complexity). The disordered stretch occupies residues 130–193 (TATENAQTNA…SNTNNQEASK (64 aa)). Residues 165-181 (QETKAEAETSVNTEEKA) are compositionally biased toward basic and acidic residues. The span at 182–193 (VQSNTNNQEASK) shows a compositional bias: polar residues.

The protein localises to the secreted. It localises to the cell wall. The sequence is that of Cell wall-binding protein YocH (yocH) from Bacillus subtilis (strain 168).